We begin with the raw amino-acid sequence, 261 residues long: Calbindin (261 aa).

Alanine 2 carries the N-acetylalanine modification. The segment at 2–7 (AESHLQ) is interaction with RANBP9. EF-hand domains follow at residues 11–46 (ITAS…LLQA), 53–88 (ELSP…EENF), 98–133 (KSCE…LLEK), 142–177 (KLAE…QENF), and 186–221 (MCGK…LCEK). Ca(2+) contacts are provided by aspartate 24, aspartate 26, serine 28, tyrosine 30, and glutamate 35. Ca(2+)-binding residues include aspartate 111, aspartate 113, serine 115, glutamate 122, aspartate 155, asparagine 157, aspartate 159, lysine 161, glutamate 166, aspartate 199, aspartate 201, asparagine 203, tyrosine 205, and glutamate 210.

The protein belongs to the calbindin family. As to quaternary structure, interacts with RANBP9. As to expression, expressed in the modiolar nerve root and in bushy neurons in the ventral cochlear nucleus (at protein level).

Its function is as follows. Buffers cytosolic calcium. May stimulate a membrane Ca(2+)-ATPase and a 3',5'-cyclic nucleotide phosphodiesterase. In Mus musculus (Mouse), this protein is Calbindin (Calb1).